Here is a 365-residue protein sequence, read N- to C-terminus: Fatty acid hydroxylase vlmA (365 aa).

A disordered region spans residues 20–41 (TTIKRRQNDKTKTPKTKPVSKI). Asn-47 is a glycosylation site (N-linked (GlcNAc...) asparagine). Helical transmembrane passes span 62 to 82 (ILLQ…VLSI), 89 to 109 (VHPF…FRFL), 144 to 164 (LNWS…LVAY), and 179 to 199 (WWAW…FYYY). The 147-residue stretch at 189 to 335 (LYPIILDFYY…TRIWDRLFGT (147 aa)) folds into the Fatty acid hydroxylase domain.

This sequence belongs to the sterol desaturase family. TMEM195 subfamily.

The protein localises to the membrane. It participates in secondary metabolite biosynthesis. In terms of biological role, fatty acid hydroxylase; part of the gene cluster that mediates the biosynthesis of verlamelin, a lipopeptide that exhibits antifungal activity against plant pathogenic fungi. Verlamelin is a cyclic hexadepsipeptide and is bridged by ester bonding between a 5-hydroxytetradecanoic acid moiety and a carboxyl group on the terminal Val of amide-bonded tetradecanoyl-hexapeptide D-allo-Thr-D-Ala-L-Pro-L-Gln-D-Tyr-L-Val. VlmA and vlmB are altogether regarded as essential components in the biosynthesis of 5-hydroxytetradecanoic acid. VlmA catalyzes the hydroxylation at position C5 of tetradecanoic acid produced in primary metabolism, while the precise function of vlmB still remains to be solved. To be loaded onto the waiting NRPS, 5-hydroxytetradecanoic acid is activated in the form of acyladenylate by the AMP-dependent ligase vlmC. VlmS seems to accept the fatty-acyl intermediate onto the initial module to further elongate amino acid residues by the downstream modules. In addition, in the last module at its C-terminus, vlmS contains a surplus condensation (C) domain that may be involved in cyclization, the last step to form verlamelin. The chain is Fatty acid hydroxylase vlmA from Lecanicillium sp.